The sequence spans 421 residues: Na(+)/H(+) antiporter NhaA 1 (421 aa).

The next 11 helical transmembrane spans lie at 48 to 68 (SSGL…NSPW), 93 to 113 (LYWW…GLEI), 129 to 149 (SLAL…YTLV), 157 to 177 (AGWG…LALL), 187 to 207 (VLLA…IALF), 215 to 235 (LALG…AAGV), 253 to 273 (LASG…IPLG), 299 to 319 (FLIL…GGSL), 326 to 346 (VVLG…WLAV), 364 to 384 (GLGL…GLAF), and 392 to 412 (AAKL…ITVL).

It belongs to the NhaA Na(+)/H(+) (TC 2.A.33) antiporter family.

It is found in the cell membrane. It catalyses the reaction Na(+)(in) + 2 H(+)(out) = Na(+)(out) + 2 H(+)(in). Functionally, na(+)/H(+) antiporter that extrudes sodium in exchange for external protons. The sequence is that of Na(+)/H(+) antiporter NhaA 1 from Deinococcus geothermalis (strain DSM 11300 / CIP 105573 / AG-3a).